The primary structure comprises 492 residues: UDP-N-acetylmuramate--L-alanine ligase (492 aa).

126-132 contributes to the ATP binding site; that stretch reads GTHGKTT.

This sequence belongs to the MurCDEF family.

It localises to the cytoplasm. The catalysed reaction is UDP-N-acetyl-alpha-D-muramate + L-alanine + ATP = UDP-N-acetyl-alpha-D-muramoyl-L-alanine + ADP + phosphate + H(+). The protein operates within cell wall biogenesis; peptidoglycan biosynthesis. Cell wall formation. In Serratia proteamaculans (strain 568), this protein is UDP-N-acetylmuramate--L-alanine ligase.